A 538-amino-acid polypeptide reads, in one-letter code: Sodium/hydrogen exchanger 1 (538 aa).

At 1–19 the chain is on the cytoplasmic side; sequence MLDSLVSKLPSLSTSDHAS. A helical transmembrane segment spans residues 20 to 40; that stretch reads VVALNLFVALLCACIVLGHLL. Residues 41-45 lie on the Vacuolar side of the membrane; sequence EENRW. A helical transmembrane segment spans residues 46–66; that stretch reads MNESITALLIGLGTGVTILLI. Over 67–73 the chain is Cytoplasmic; the sequence is SKGKSSH. The segment at residues 74-94 is an intramembrane region (helical); the sequence is LLVFSEDLFFIYLLPPIIFNA. Over 95–106 the chain is Cytoplasmic; the sequence is GFQVKKKQFFRN. Residues 107–127 form a helical membrane-spanning segment; it reads FVTIMLFGAVGTIISCTIISL. The Vacuolar segment spans residues 128-146; that stretch reads GVTQFFKKLDIGTFDLGDY. 2 consecutive intramembrane regions (helical) follow at residues 147-166 and 172-192; these read LAIG…QVLN and LLYS…VVVF. Topologically, residues 193–216 are vacuolar; the sequence is NAIQSFDLTHLNHEAAFHLLGNFL. A helical transmembrane segment spans residues 217-237; that stretch reads YLFLLSTLLGAATGLISAYVI. Residues 238–262 are Cytoplasmic-facing; the sequence is KKLYFGRHSTDREVALMMLMAYLSY. A helical transmembrane segment spans residues 263–283; that stretch reads MLAELFDLSGILTVFFCGIVM. The Vacuolar segment spans residues 284-302; sequence SHYTWHNVTESSRITTKHT. N-linked (GlcNAc...) asparagine glycosylation occurs at Asn-290. Residues 303–323 traverse the membrane as a helical segment; that stretch reads FATLSFLAETFIFLYVGMDAL. Residues 324–342 lie on the Cytoplasmic side of the membrane; sequence DIDKWRSVSDTPGTSIAVS. A helical membrane pass occupies residues 343–363; that stretch reads SILMGLVMVGRAAFVFPLSFL. Residues 364–378 lie on the Vacuolar side of the membrane; it reads SNLAKKNQSEKINFN. A glycan (N-linked (GlcNAc...) asparagine) is linked at Asn-370. Residues 379–399 traverse the membrane as a helical segment; sequence MQVVIWWSGLMRGAVSMALAY. The Cytoplasmic segment spans residues 400–413; it reads NKFTRAGHTDVRGN. The chain crosses the membrane as a helical span at residues 414–434; that stretch reads AIMITSTITVCLFSTVVFGML. The Vacuolar portion of the chain corresponds to 435-538; sequence TKPLISYLLP…ERNPPDLSKA (104 aa). A glycan (N-linked (GlcNAc...) asparagine) is linked at Asn-447. An interaction with CML18/CAM15 region spans residues 496–518; sequence RTVHYYWRQFDDSFMRPVFGGRG.

Belongs to the monovalent cation:proton antiporter 1 (CPA1) transporter (TC 2.A.36) family. Calcium and pH-dependent interaction with CML18/CAM15 (increases when pH decreases, better at pH 5.5 than at pH 7.5). In terms of tissue distribution, ubiquitous, with higher levels around vascular tissues and guard cells.

It is found in the vacuole membrane. It localises to the endoplasmic reticulum membrane. The protein localises to the golgi apparatus membrane. The enzyme catalyses Na(+)(in) + H(+)(out) = Na(+)(out) + H(+)(in). It catalyses the reaction K(+)(in) + H(+)(out) = K(+)(out) + H(+)(in). Functionally, acts in low affinity electroneutral exchange of protons for cations such as Na(+) or K(+) across membranes. Can also exchange Li(+) and Cs(+) with a lower affinity. Involved in vacuolar ion compartmentalization necessary for cell volume regulation and cytoplasmic Na(+) detoxification. Required during leaves expansion, probably to stimulate epidermal cell expansion. Confers competence to grow in high salinity conditions. This is Sodium/hydrogen exchanger 1 (NHX1) from Arabidopsis thaliana (Mouse-ear cress).